The primary structure comprises 221 residues: UPF0502 protein XOO0224 (221 aa).

The protein belongs to the UPF0502 family.

This chain is UPF0502 protein XOO0224, found in Xanthomonas oryzae pv. oryzae (strain MAFF 311018).